Consider the following 429-residue polypeptide: Glutamate-1-semialdehyde 2,1-aminomutase (429 aa).

N6-(pyridoxal phosphate)lysine is present on Lys267.

It belongs to the class-III pyridoxal-phosphate-dependent aminotransferase family. HemL subfamily. Homodimer. Requires pyridoxal 5'-phosphate as cofactor.

It localises to the cytoplasm. It catalyses the reaction (S)-4-amino-5-oxopentanoate = 5-aminolevulinate. Its pathway is porphyrin-containing compound metabolism; protoporphyrin-IX biosynthesis; 5-aminolevulinate from L-glutamyl-tRNA(Glu): step 2/2. The chain is Glutamate-1-semialdehyde 2,1-aminomutase from Xanthomonas campestris pv. campestris (strain 8004).